The primary structure comprises 213 residues: rRNA N(6)-adenosine-methyltransferase Mettl5 (213 aa).

S-adenosyl-L-methionine is bound by residues Gln-28, Thr-31, Gly-59, Cys-62, and 108–109 (DV).

Belongs to the methyltransferase superfamily. PrmA family. Heterodimer; heterodimerizes with Trmt112. As to expression, enriched in the brain.

Its subcellular location is the cytoplasm. It carries out the reaction adenosine in rRNA + S-adenosyl-L-methionine = N(6)-methyladenosine in rRNA + S-adenosyl-L-homocysteine + H(+). Catalytic subunit of a heterodimer with Trmt112, which specifically methylates the 6th position of adenine in 18S rRNA. The protein is rRNA N(6)-adenosine-methyltransferase Mettl5 of Drosophila melanogaster (Fruit fly).